Here is a 125-residue protein sequence, read N- to C-terminus: Holo-[acyl-carrier-protein] synthase (125 aa).

The Mg(2+) site is built by D9 and E58.

It belongs to the P-Pant transferase superfamily. AcpS family. The cofactor is Mg(2+).

It is found in the cytoplasm. The catalysed reaction is apo-[ACP] + CoA = holo-[ACP] + adenosine 3',5'-bisphosphate + H(+). Transfers the 4'-phosphopantetheine moiety from coenzyme A to a Ser of acyl-carrier-protein. The protein is Holo-[acyl-carrier-protein] synthase of Shewanella amazonensis (strain ATCC BAA-1098 / SB2B).